A 166-amino-acid chain; its full sequence is Photosystem I assembly protein Ycf3 (166 aa).

TPR repeat units follow at residues 31–64 (AFKY…EEDP), 68–101 (SYIL…NPNL), and 116–149 (GEQA…APNN).

It belongs to the Ycf3 family.

It is found in the cellular thylakoid membrane. Its function is as follows. Essential for the assembly of the photosystem I (PSI) complex. May act as a chaperone-like factor to guide the assembly of the PSI subunits. The sequence is that of Photosystem I assembly protein Ycf3 from Acaryochloris marina (strain MBIC 11017).